We begin with the raw amino-acid sequence, 452 residues long: Cysteine--tRNA ligase (452 aa).

Residue C35 coordinates Zn(2+). Residues 37–47 (PTVYDRAHLGN) carry the 'HIGH' region motif. Residues C215, H240, and E244 each coordinate Zn(2+). The short motif at 273–277 (KMSKS) is the 'KMSKS' region element. K276 lines the ATP pocket.

Belongs to the class-I aminoacyl-tRNA synthetase family. As to quaternary structure, monomer. Zn(2+) serves as cofactor.

The protein localises to the cytoplasm. The catalysed reaction is tRNA(Cys) + L-cysteine + ATP = L-cysteinyl-tRNA(Cys) + AMP + diphosphate. The protein is Cysteine--tRNA ligase of Gluconobacter oxydans (strain 621H) (Gluconobacter suboxydans).